The chain runs to 473 residues: Argininosuccinate lyase (473 aa).

It belongs to the lyase 1 family. Argininosuccinate lyase subfamily.

The protein localises to the cytoplasm. The catalysed reaction is 2-(N(omega)-L-arginino)succinate = fumarate + L-arginine. It participates in amino-acid biosynthesis; L-arginine biosynthesis; L-arginine from L-ornithine and carbamoyl phosphate: step 3/3. This Chelativorans sp. (strain BNC1) protein is Argininosuccinate lyase.